Reading from the N-terminus, the 295-residue chain is UDP-N-acetylenolpyruvoylglucosamine reductase (295 aa).

The FAD-binding PCMH-type domain occupies 24-188 (KVGGNAEIFF…LKVVFKINKG (165 aa)). Residue Arg-168 is part of the active site. Residue Ser-217 is the Proton donor of the active site. The active site involves Glu-287.

The protein belongs to the MurB family. Requires FAD as cofactor.

The protein resides in the cytoplasm. The enzyme catalyses UDP-N-acetyl-alpha-D-muramate + NADP(+) = UDP-N-acetyl-3-O-(1-carboxyvinyl)-alpha-D-glucosamine + NADPH + H(+). The protein operates within cell wall biogenesis; peptidoglycan biosynthesis. In terms of biological role, cell wall formation. In Rickettsia peacockii (strain Rustic), this protein is UDP-N-acetylenolpyruvoylglucosamine reductase.